Consider the following 197-residue polypeptide: Imidazoleglycerol-phosphate dehydratase (197 aa).

It belongs to the imidazoleglycerol-phosphate dehydratase family.

It is found in the cytoplasm. It catalyses the reaction D-erythro-1-(imidazol-4-yl)glycerol 3-phosphate = 3-(imidazol-4-yl)-2-oxopropyl phosphate + H2O. The protein operates within amino-acid biosynthesis; L-histidine biosynthesis; L-histidine from 5-phospho-alpha-D-ribose 1-diphosphate: step 6/9. This Pseudomonas syringae pv. syringae (strain B728a) protein is Imidazoleglycerol-phosphate dehydratase.